The chain runs to 285 residues: 2-dehydro-3-deoxyphosphooctonate aldolase (285 aa).

The protein belongs to the KdsA family.

The protein resides in the cytoplasm. The enzyme catalyses D-arabinose 5-phosphate + phosphoenolpyruvate + H2O = 3-deoxy-alpha-D-manno-2-octulosonate-8-phosphate + phosphate. Its pathway is carbohydrate biosynthesis; 3-deoxy-D-manno-octulosonate biosynthesis; 3-deoxy-D-manno-octulosonate from D-ribulose 5-phosphate: step 2/3. It functions in the pathway bacterial outer membrane biogenesis; lipopolysaccharide biosynthesis. The sequence is that of 2-dehydro-3-deoxyphosphooctonate aldolase from Leptothrix cholodnii (strain ATCC 51168 / LMG 8142 / SP-6) (Leptothrix discophora (strain SP-6)).